Reading from the N-terminus, the 557-residue chain is DNA mismatch repair protein MutL (557 aa).

The protein belongs to the DNA mismatch repair MutL/HexB family.

This protein is involved in the repair of mismatches in DNA. It is required for dam-dependent methyl-directed DNA mismatch repair. May act as a 'molecular matchmaker', a protein that promotes the formation of a stable complex between two or more DNA-binding proteins in an ATP-dependent manner without itself being part of a final effector complex. This Methanothrix thermoacetophila (strain DSM 6194 / JCM 14653 / NBRC 101360 / PT) (Methanosaeta thermophila) protein is DNA mismatch repair protein MutL.